Here is a 234-residue protein sequence, read N- to C-terminus: Segregation and condensation protein A (234 aa).

It belongs to the ScpA family. As to quaternary structure, component of a cohesin-like complex composed of ScpA, ScpB and the Smc homodimer, in which ScpA and ScpB bind to the head domain of Smc. The presence of the three proteins is required for the association of the complex with DNA.

Its subcellular location is the cytoplasm. In terms of biological role, participates in chromosomal partition during cell division. May act via the formation of a condensin-like complex containing Smc and ScpB that pull DNA away from mid-cell into both cell halves. The polypeptide is Segregation and condensation protein A (Streptococcus pyogenes serotype M3 (strain ATCC BAA-595 / MGAS315)).